A 94-amino-acid polypeptide reads, in one-letter code: MTTINVEVRNDQGKGASRRLRAANKFPAIVYGGSEAAISIALDHDTTKNLELKPGFYDSVLTLVIDGKETKVKVQAVQRHAFKPKLTHIDFVRV.

Belongs to the bacterial ribosomal protein bL25 family. In terms of assembly, part of the 50S ribosomal subunit; part of the 5S rRNA/L5/L18/L25 subcomplex. Contacts the 5S rRNA. Binds to the 5S rRNA independently of L5 and L18.

Its function is as follows. This is one of the proteins that binds to the 5S RNA in the ribosome where it forms part of the central protuberance. This Yersinia pestis bv. Antiqua (strain Antiqua) protein is Large ribosomal subunit protein bL25.